The chain runs to 484 residues: MIAPDKVHYHVPEMRRIKNIHFVGIGGAGMGGIAEVLLNEGYQVSGSDRQANGMTDRLSGLGATIFFGHQASNVEKANVVVVSSAIDPTNPEVNAANEMRIPVIRRAEMLAELMRFRHGIAIAGTHGKTTTTSLIATIFAQAELDPTFVIGGLLNSAGTNARLGSSQYLIAEADESDASFVHLQPMVSVVTNIEPDHMETYQGDFQKMQDTYIDFLHNLPFYGLAVLCIDDPVITQLLPRIKRKYLTYGYSEVADVRATHVKHTFNQSEFTLKRKDHQDIQVVVNAPGKHNVLNALAAIAVATDENIEDAAITAALANFSGIGRRFEMLGEFATGEGDVLLVDDYGHHPTEVEATIAVARNNWPDRRLVMAYQPHRYSRTRDLYEDFVRVLSQVDVLLLLDVYSAGEEKIEGADSKSLCRSMRQRGQLEPIYVADKNELPKLLADNLKDQDILLTQGAGNIGQIAKELQEMKLDKGALRTGWSK.

124 to 130 lines the ATP pocket; sequence GTHGKTT.

It belongs to the MurCDEF family.

It is found in the cytoplasm. The catalysed reaction is UDP-N-acetyl-alpha-D-muramate + L-alanine + ATP = UDP-N-acetyl-alpha-D-muramoyl-L-alanine + ADP + phosphate + H(+). It functions in the pathway cell wall biogenesis; peptidoglycan biosynthesis. In terms of biological role, cell wall formation. This is UDP-N-acetylmuramate--L-alanine ligase from Pseudoalteromonas atlantica (strain T6c / ATCC BAA-1087).